Consider the following 676-residue polypeptide: Envelope glycoprotein (676 aa).

Residues 1–34 form the signal peptide; that stretch reads MACSTLSKSPKDKIDPRDLLIPLILFLSLKGARS. Positions 35 to 270 are receptor-binding domain (RBD); the sequence is AAPGSSPHQV…KYQNLGPRVP (236 aa). The Extracellular portion of the chain corresponds to 35 to 620; it reads AAPGSSPHQV…FNRSPWFTTL (586 aa). N46 is a glycosylation site (N-linked (GlcNAc...) asparagine; by host). Cystine bridges form between C80–C132, C106–C121, C107–C117, C155–C175, and C167–C180. H89 is a binding site for Zn(2+). A Zn(2+)-binding site is contributed by D120. A glycan (N-linked (GlcNAc...) asparagine; by host) is linked at N202. A disulfide bond links C212 and C218. Positions 287 to 322 are disordered; the sequence is NPLPKPAKSPSASNSTPTLISPSPAPTQPPPAGTGD. Low complexity predominate over residues 294-308; it reads KSPSASNSTPTLISP. Residues 309 to 318 are compositionally biased toward pro residues; sequence SPAPTQPPPA. N-linked (GlcNAc...) asparagine; by host glycosylation occurs at N336. 6 disulfide bridges follow: C346–C349, C346–C573, C376–C430, C395–C407, C437–C450, and C565–C572. The CXXC signature appears at 346–349; it reads CWLC. 2 N-linked (GlcNAc...) asparagine; by host glycosylation sites follow: N368 and N375. N408 and N444 each carry an N-linked (GlcNAc...) asparagine; by host glycan. A fusion peptide region spans residues 482–502; the sequence is VSLTLALLLGGLTMGGIAAGV. Residues 513-547 are a coiled coil; that stretch reads QQFQQLHAAVQDDLKEVEKSITNLEKSLTSLSEVV. The tract at residues 548-564 is immunosuppression; that stretch reads LQNRRGLDLLFLKEGGL. The short motif at 565-573 is the CX6CC element; sequence CAALKEECC. Residues 621–641 form a helical membrane-spanning segment; sequence ISTIMGPLIILLLILLFGPCI. A lipid anchor (S-palmitoyl cysteine; by host) is attached at C640. Over 642–676 the chain is Cytoplasmic; the sequence is LNRLVQFVKDRISVVQALVLTQQYHQLKPLEYEPQ. The short motif at 665–668 is the YXXL motif; contains endocytosis signal element; the sequence is YHQL.

As to quaternary structure, the mature envelope protein (Env) consists of a trimer of SU-TM heterodimers attached by a labile interchain disulfide bond. In terms of processing, specific enzymatic cleavages in vivo yield mature proteins. Envelope glycoproteins are synthesized as an inactive precursor that is N-glycosylated and processed likely by host cell furin or by a furin-like protease in the Golgi to yield the mature SU and TM proteins. The cleavage site between SU and TM requires the minimal sequence [KR]-X-[KR]-R. The R-peptide is released from the C-terminus of the cytoplasmic tail of the TM protein upon particle formation as a result of proteolytic cleavage by the viral protease. Cleavage of this peptide is required for TM to become fusogenic. Post-translationally, the CXXC motif is highly conserved across a broad range of retroviral envelope proteins. It is thought to participate in the formation of a labile disulfide bond possibly with the CX6CC motif present in the transmembrane protein. Isomerization of the intersubunit disulfide bond to an SU intrachain disulfide bond is thought to occur upon receptor recognition in order to allow membrane fusion. The transmembrane protein is palmitoylated. In terms of processing, the R-peptide is palmitoylated.

The protein localises to the virion membrane. Its subcellular location is the host cell membrane. The surface protein (SU) attaches the virus to the host cell by binding to its receptor. This interaction triggers the refolding of the transmembrane protein (TM) and is thought to activate its fusogenic potential by unmasking its fusion peptide. Fusion occurs at the host cell plasma membrane. Functionally, the transmembrane protein (TM) acts as a class I viral fusion protein. Under the current model, the protein has at least 3 conformational states: pre-fusion native state, pre-hairpin intermediate state, and post-fusion hairpin state. During viral and target cell membrane fusion, the coiled coil regions (heptad repeats) assume a trimer-of-hairpins structure, positioning the fusion peptide in close proximity to the C-terminal region of the ectodomain. The formation of this structure appears to drive apposition and subsequent fusion of viral and target cell membranes. Membranes fusion leads to delivery of the nucleocapsid into the cytoplasm. The chain is Envelope glycoprotein (env) from Mus musculus (Mouse).